The chain runs to 678 residues: Ribonuclease Z 2, mitochondrial (678 aa).

A mitochondrion-targeting transit peptide spans 1 to 37 (MKASLLVPRRALLFGQLLPPKYSWYSVKRWQSQLTFR).

Belongs to the RNase Z family. The cofactor is Zn(2+).

Its subcellular location is the mitochondrion. The protein resides in the cytoplasm. It carries out the reaction Endonucleolytic cleavage of RNA, removing extra 3' nucleotides from tRNA precursor, generating 3' termini of tRNAs. A 3'-hydroxy group is left at the tRNA terminus and a 5'-phosphoryl group is left at the trailer molecule.. Its function is as follows. Zinc phosphodiesterase, which displays some tRNA 3'-processing endonuclease activity. May be involved in tRNA maturation, by removing a 3'-trailer from precursor tRNA. The sequence is that of Ribonuclease Z 2, mitochondrial (trz2) from Schizosaccharomyces pombe (strain 972 / ATCC 24843) (Fission yeast).